A 575-amino-acid polypeptide reads, in one-letter code: Arginine--tRNA ligase (575 aa).

The 'HIGH' region signature appears at 131–141 (ANPTGPLHVGH).

It belongs to the class-I aminoacyl-tRNA synthetase family. In terms of assembly, monomer.

The protein localises to the cytoplasm. The catalysed reaction is tRNA(Arg) + L-arginine + ATP = L-arginyl-tRNA(Arg) + AMP + diphosphate. This Jannaschia sp. (strain CCS1) protein is Arginine--tRNA ligase.